Consider the following 521-residue polypeptide: Glutamate--cysteine ligase (521 aa).

Belongs to the glutamate--cysteine ligase type 1 family. Type 1 subfamily.

The catalysed reaction is L-cysteine + L-glutamate + ATP = gamma-L-glutamyl-L-cysteine + ADP + phosphate + H(+). The protein operates within sulfur metabolism; glutathione biosynthesis; glutathione from L-cysteine and L-glutamate: step 1/2. This Aliivibrio salmonicida (strain LFI1238) (Vibrio salmonicida (strain LFI1238)) protein is Glutamate--cysteine ligase.